The following is a 253-amino-acid chain: tRNA pseudouridine synthase A (253 aa).

D53 acts as the Nucleophile in catalysis. Y112 is a binding site for substrate.

Belongs to the tRNA pseudouridine synthase TruA family. In terms of assembly, homodimer.

The enzyme catalyses uridine(38/39/40) in tRNA = pseudouridine(38/39/40) in tRNA. Its function is as follows. Formation of pseudouridine at positions 38, 39 and 40 in the anticodon stem and loop of transfer RNAs. This chain is tRNA pseudouridine synthase A, found in Lactococcus lactis subsp. lactis (strain IL1403) (Streptococcus lactis).